A 589-amino-acid polypeptide reads, in one-letter code: Kelch-like protein diablo (589 aa).

Residues 1-22 (MGDVLISDRPPSPARLSHTSEK) form a disordered region. The region spanning 41–108 (CDVVINVSGR…CYTSHIVVEE (68 aa)) is the BTB domain. The 103-residue stretch at 143–245 (CLGIRAFADT…SPKFLVGTVG (103 aa)) folds into the BACK domain. Kelch repeat units lie at residues 292 to 338 (VLFA…VLND), 340 to 386 (LYAV…VLDG), 387 to 433 (FLYA…VLGG), 435 to 480 (LYAI…VFNN), 482 to 527 (IYAV…VVNG), and 528 to 574 (QLYA…VMRA).

It functions in the pathway protein modification; protein ubiquitination. In terms of biological role, probable substrate-specific adapter of an E3 ubiquitin-protein ligase complex which mediates the ubiquitination and subsequent proteasomal degradation of target proteins. May have a role in synapse differentiation and growth. This is Kelch-like protein diablo from Aedes aegypti (Yellowfever mosquito).